A 1109-amino-acid chain; its full sequence is ABC transporter G family member 28 (1109 aa).

2 helical membrane passes run 5 to 25 and 291 to 311; these read NSYF…LILQ and NITA…IILY. The segment at 325–411 is disordered; it reads QAKSREKAVQ…DTKKGKKKEK (87 aa). Positions 339–357 are enriched in basic and acidic residues; the sequence is SQSREKWKSAKDIAKKHAT. Residues 499 to 741 enclose the ABC transporter domain; that stretch reads VAFKDLSITL…FSSLGIVVPE (243 aa). An ATP-binding site is contributed by 533–540; sequence GPSGAGKT. Residues 859-1056 enclose the ABC transmembrane type-2 domain; sequence QQYRYFLGRL…ALEAFVVSNA (198 aa). The next 6 membrane-spanning stretches (helical) occupy residues 879–899, 904–924, 954–974, 986–1006, 1008–1028, and 1084–1104; these read LAVD…LAKV, FGAM…KITA, TVDH…FYFF, VVLI…AILF, PGPA…IATS, and CLVF…FCMV.

The protein belongs to the ABC transporter superfamily. ABCG family. Eye pigment precursor importer (TC 3.A.1.204) subfamily.

The protein localises to the membrane. The chain is ABC transporter G family member 28 (ABCG28) from Arabidopsis thaliana (Mouse-ear cress).